A 61-amino-acid polypeptide reads, in one-letter code: Large ribosomal subunit protein bL32 (61 aa).

Over residues 1–16 the composition is skewed to basic residues; the sequence is MAVPKRKTSPSKRGMR. The interval 1 to 35 is disordered; it reads MAVPKRKTSPSKRGMRRSADGLKSATYVEDKNSGE.

The protein belongs to the bacterial ribosomal protein bL32 family.

In Agrobacterium fabrum (strain C58 / ATCC 33970) (Agrobacterium tumefaciens (strain C58)), this protein is Large ribosomal subunit protein bL32.